The chain runs to 196 residues: Probable histone chaperone ASF1A (196 aa).

Residues 146–157 (VTKFPIDFHPEE) show a composition bias toward basic and acidic residues. Residues 146–196 (VTKFPIDFHPEEEQTAATAAPPEQSDEQQPNVNGEAQVLPDQSVEPKPEES) are disordered.

This sequence belongs to the ASF1 family. As to quaternary structure, interacts with histone H3 and histone H4. Component of the HIRA complex made of UBN1, UBN2, ASF1A, CABIN1 and HIRA. Interacts with HIRA. As to expression, expressed in leaves and flower buds.

Its subcellular location is the nucleus. It is found in the nucleolus. In terms of biological role, histone chaperone that facilitates histone deposition and histone exchange and removal during nucleosome assembly and disassembly. While encoded by a region of the Arabidopsis thaliana genome that is homologous to the Brassica S-locus for self incompatibility, this protein may not play the same role in Arabidopsis thaliana. The sequence is that of Probable histone chaperone ASF1A (ASF1A) from Arabidopsis thaliana (Mouse-ear cress).